We begin with the raw amino-acid sequence, 384 residues long: Chaperone protein DnaJ (384 aa).

Positions 5–70 (DYYEVLGVAR…QKKAAYDRFG (66 aa)) constitute a J domain. A CR-type zinc finger spans residues 138–216 (GAQKTINVPG…CRGAGRVQKE (79 aa)). Zn(2+) contacts are provided by cysteine 151, cysteine 154, cysteine 168, cysteine 171, cysteine 190, cysteine 193, cysteine 204, and cysteine 207. CXXCXGXG motif repeat units lie at residues 151 to 158 (CAACNGTG), 168 to 175 (CPTCSGMG), 190 to 197 (CPTCSGHG), and 204 to 211 (CQECRGAG). The disordered stretch occupies residues 300-322 (KVPPGTQSGKQLRLRGKGMPPLR).

It belongs to the DnaJ family. As to quaternary structure, homodimer. Requires Zn(2+) as cofactor.

The protein resides in the cytoplasm. Functionally, participates actively in the response to hyperosmotic and heat shock by preventing the aggregation of stress-denatured proteins and by disaggregating proteins, also in an autonomous, DnaK-independent fashion. Unfolded proteins bind initially to DnaJ; upon interaction with the DnaJ-bound protein, DnaK hydrolyzes its bound ATP, resulting in the formation of a stable complex. GrpE releases ADP from DnaK; ATP binding to DnaK triggers the release of the substrate protein, thus completing the reaction cycle. Several rounds of ATP-dependent interactions between DnaJ, DnaK and GrpE are required for fully efficient folding. Also involved, together with DnaK and GrpE, in the DNA replication of plasmids through activation of initiation proteins. The protein is Chaperone protein DnaJ of Paracoccus denitrificans (strain Pd 1222).